Reading from the N-terminus, the 574-residue chain is Phosphate permease PHO89 (574 aa).

Residues 1–5 (MALHQ) lie on the Extracellular side of the membrane. The chain crosses the membrane as a helical span at residues 6–26 (FDYIFAIAMLFAFLDAFNIGA). Topologically, residues 27 to 43 (NDVANSFASSISSRSLK) are cytoplasmic. A helical membrane pass occupies residues 44–64 (YWQAMVLAGLCEFLGAVLAGA). Over 65 to 84 (RVSGTIKNNIIDSSIFTNDP) the chain is Extracellular. The helical transmembrane segment at 85–105 (AVLMLTMTSALIGSSCWLTFA) threads the bilayer. Residues 106–117 (TAIGMPVSTTHS) lie on the Cytoplasmic side of the membrane. Residues 118–138 (IVGGTIGAGIAAGGANGVVWG) traverse the membrane as a helical segment. Residues 139-145 (WSGVSQI) lie on the Extracellular side of the membrane. Residues 146-166 (IASWFIAPILAGAIAAIVFSI) traverse the membrane as a helical segment. Residues 167-184 (SRFSVLEVKSLERSIKNA) are Cytoplasmic-facing. A helical membrane pass occupies residues 185-205 (LLLVGVLVFATFSILTMLIVW). At 206–222 (KGSPNLHLDDLSETETA) the chain is on the extracellular side. A helical transmembrane segment spans residues 223–243 (VSIVLTGAIASIVYFIFFYPF). At 244 to 354 (YRRKVLDQDW…SLLKQGPKKW (111 aa)) the chain is on the cytoplasmic side. Residues 301–332 (EDEENKAASNSNDSVKNKEDIQEVDLVRTETE) form a disordered region. A compositionally biased stretch (basic and acidic residues) spans 315–332 (VKNKEDIQEVDLVRTETE). Residues 355-375 (PLLFWLVISHGWTQDVIHAQV) form a helical membrane-spanning segment. Topologically, residues 376–398 (NDRDMLSGDLKGMYERSKFYDNR) are extracellular. The helical transmembrane segment at 399–419 (VEYIYSVLQAITAATMSFAHG) threads the bilayer. At 420–447 (ANDVANATGPLSAVYVIWKTNTIGAKSE) the chain is on the cytoplasmic side. Residues 448-468 (VPVWVLAYGGVALVIGCWTYG) form a helical membrane-spanning segment. Topologically, residues 469-503 (YNIIKNLGNKMILQSPSRGFSIELAVAITTVMATQ) are extracellular. A helical membrane pass occupies residues 504 to 524 (LGIPTSTTQIAVGGIVAVGLC). At 525–541 (NKDLKSVNWRMVAWCYS) the chain is on the cytoplasmic side. A helical transmembrane segment spans residues 542–562 (GWFLTLPIAGLIAGIINGIIL). The Extracellular portion of the chain corresponds to 563–574 (NAPRFGVEYQMT).

The protein belongs to the inorganic phosphate transporter (PiT) (TC 2.A.20) family. In terms of assembly, forms homodimers and higher order homooligomers.

The protein resides in the cell membrane. The catalysed reaction is 2 Na(+)(out) + phosphate(out) = 2 Na(+)(in) + phosphate(in). Weakly stimulated by Li(+) and K(+). Inhibited by monensin. Inhibited by phosphonoacetic acid. Inhibited by methylphosphonate. Inhibited by dimethylphosphonate. Sodium-phosphate symporter. Active in early growth phase. The sequence is that of Phosphate permease PHO89 (PHO89) from Saccharomyces cerevisiae (strain ATCC 204508 / S288c) (Baker's yeast).